A 267-amino-acid polypeptide reads, in one-letter code: Indole-3-glycerol phosphate synthase (267 aa).

It belongs to the TrpC family.

The catalysed reaction is 1-(2-carboxyphenylamino)-1-deoxy-D-ribulose 5-phosphate + H(+) = (1S,2R)-1-C-(indol-3-yl)glycerol 3-phosphate + CO2 + H2O. It functions in the pathway amino-acid biosynthesis; L-tryptophan biosynthesis; L-tryptophan from chorismate: step 4/5. This is Indole-3-glycerol phosphate synthase from Dichelobacter nodosus (strain VCS1703A).